The sequence spans 485 residues: Glycogen synthase (485 aa).

An ADP-alpha-D-glucose-binding site is contributed by K20.

This sequence belongs to the glycosyltransferase 1 family. Bacterial/plant glycogen synthase subfamily.

It catalyses the reaction [(1-&gt;4)-alpha-D-glucosyl](n) + ADP-alpha-D-glucose = [(1-&gt;4)-alpha-D-glucosyl](n+1) + ADP + H(+). It participates in glycan biosynthesis; glycogen biosynthesis. Its function is as follows. Synthesizes alpha-1,4-glucan chains using ADP-glucose. The chain is Glycogen synthase from Vibrio vulnificus (strain YJ016).